The primary structure comprises 431 residues: AEWKEEVEVLVQRVVKDITGAFRRNPNIDEIGLIPCPEATYNRSPIVLVENKLGVESWCIKFLLPYVHNKLLLYRQKKLWLNRDELIDVTCTLLLLNPDFTTAWNVRKELIQSGTLNPVKDLQLGKLALTKFPKSPETWIHRRWVLQRVVQELVVAAVVGKDATCPETYERIQTIVQEEMHVCYEAAGRYPSNYNSWSHRIWVIQHLGNLNVKLLIDELSSTKHWVSMHVSDHSGFHYRQFLLKSLLCKTLKDSDNVTAVPDLIANEKNPCLPREGEAIWNQICFDLPYLLEEEMKLNRELLDSYPGHETLWCHRRQIFKLIHQLLLEQSQSATPQSTSASITDGSGNISHLSSTFQSYVTNPMDVDGMSDPNKQGYTQETKRLKRAPVQDSLSLDSELRFINCVLTNCCSPEQSRFAASYRKWLLSLQGY.

PFTA repeat units lie at residues 85-118 (ELID…TLNP), 120-153 (KDLQ…VQEL), 178-211 (EEMH…GNLN), 217-250 (DELS…LCKT), and 293-326 (EEMK…HQLL). Residues 363–383 (PMDVDGMSDPNKQGYTQETKR) form a disordered region. The stretch at 394–431 (SLDSELRFINCVLTNCCSPEQSRFAASYRKWLLSLQGY) is one PFTA 6 repeat.

Belongs to the protein prenyltransferase subunit alpha family.

The polypeptide is Protein prenyltransferase alpha subunit repeat-containing protein 1-B (ptar1-b) (Xenopus laevis (African clawed frog)).